Reading from the N-terminus, the 158-residue chain is Snaclec flavocetin-A subunit alpha (158 aa).

The first 23 residues, Met-1–Ala-23, serve as a signal peptide directing secretion. Cystine bridges form between Cys-27–Cys-38, Cys-55–Cys-152, and Cys-127–Cys-144. The C-type lectin domain maps to Tyr-34–Lys-153.

Belongs to the snaclec family. As to quaternary structure, tetramer of heterodimers of alpha and beta subunits (alphabeta)(4); disulfide-linked. As to expression, expressed by the venom gland.

The protein localises to the secreted. Strong platelet aggregation inhibitor. Binds specifically to platelet glycoprotein Ibalpha (GP1BA) with high affinity and inhibits vWF-dependent platelet aggregation. Has also been observed to induce small agglutinates in washed platelets by binding to GPIb. This chain is Snaclec flavocetin-A subunit alpha, found in Protobothrops flavoviridis (Habu).